Reading from the N-terminus, the 87-residue chain is Small ribosomal subunit protein bS20 (87 aa).

Residues 1–11 (MANIKSKKKRI) show a composition bias toward basic residues. Residues 1–25 (MANIKSKKKRIKTNEKARQRNKAIR) are disordered.

Belongs to the bacterial ribosomal protein bS20 family.

Functionally, binds directly to 16S ribosomal RNA. The chain is Small ribosomal subunit protein bS20 from Corynebacterium kroppenstedtii (strain DSM 44385 / JCM 11950 / CIP 105744 / CCUG 35717).